The sequence spans 690 residues: MAKKKSEDHSGGDANDSDYNEEPNFEDPPNFVDNISDDDLLGDMLAQRPSEADGVESVVVVDNIPKVEPVRLEKLKSVINKLFSHCGDIVNVVYPVDEEGKTKGYAFMEYKHAGQAEEAVKKLNNHRLDKNHTFAVNLFTDFQKYENIPEKWEPPTVQSFKVQNDLYNFINDPDAYDQYCVAAETSQNCVQVGFWQNVLPEPNELETRERFTDTFVKWSPLGTYVVTFHKPGVAIWGGSSFQKIQKFPHTGTQFVEFSPCENYLVTYGPTPTGQKIIIWDIRTGAEKRSFVADGMSVLSMFRWSHDDKYVARMGDNSIHIYETPSFYLLDLKSIKIPGIRGFSWSPTDNVIAYWVEEQNQIPARVTLMEIPKKRETRNKNLFHVADCKLHWQKSGDYLCVKVDRYSKLKKDKKELDVKFLGMFYNFEIFHMREKEVPVDSVEIRELILAFAWEPIGNKFSIIHGEPNSANVSFYEVNKGVKPSLVKRLEKKSCTHLFWSPRGQFIVMANLTMGTFEFVDSTNDYIISASPDHFRASEVEWDPTGRYVVTGVSSWKVKEDTGFNMYTFQGRIIKRTILKNFVQFLWRPRPPTLLSEDKQKDIKKNLKKYYPAFEQKDRLRLTRASKELLEKRSQLRETFMEYRNKRIGEWKEQKSRRVMLRGHVDTDNLETEEVDEEVVEFLVKEEITLLE.

The segment covering 1–11 (MAKKKSEDHSG) has biased composition (basic and acidic residues). Residues 1–37 (MAKKKSEDHSGGDANDSDYNEEPNFEDPPNFVDNISD) form a disordered region. Over residues 15 to 25 (NDSDYNEEPNF) the composition is skewed to acidic residues. The 85-residue stretch at 57–141 (SVVVVDNIPK…HTFAVNLFTD (85 aa)) folds into the RRM domain. WD repeat units lie at residues 207-246 (TRER…KIQK), 247-289 (FPHT…EKRS), 293-331 (DGMS…LLDL), 334-369 (IKIP…TLME), 442-484 (EIRE…KPSL), and 530-575 (PDHF…IKRT). Residues 614–645 (QKDRLRLTRASKELLEKRSQLRETFMEYRNKR) adopt a coiled-coil conformation.

It belongs to the eIF-3 subunit B family. Component of the eukaryotic translation initiation factor 3 (eIF-3) complex. The eIF-3 complex interacts with pix. Interacts with mxt.

It is found in the cytoplasm. RNA-binding component of the eukaryotic translation initiation factor 3 (eIF-3) complex, which is involved in protein synthesis of a specialized repertoire of mRNAs and, together with other initiation factors, stimulates binding of mRNA and methionyl-tRNAi to the 40S ribosome. The eIF-3 complex specifically targets and initiates translation of a subset of mRNAs involved in cell proliferation. This chain is Eukaryotic translation initiation factor 3 subunit B, found in Drosophila pseudoobscura pseudoobscura (Fruit fly).